Reading from the N-terminus, the 311-residue chain is Probable flavin reductase (311 aa).

Residues Thr-38–Ser-41, Cys-55–Arg-61, Phe-88–Ala-89, and Arg-95 contribute to the FMN site.

It belongs to the non-flavoprotein flavin reductase family.

The chain is Probable flavin reductase from Rhizobium meliloti (strain 1021) (Ensifer meliloti).